The sequence spans 413 residues: Peptidase T (413 aa).

His84 contacts Zn(2+). Asp86 is a catalytic residue. A Zn(2+)-binding site is contributed by Asp147. The Proton acceptor role is filled by Glu181. Residues Glu182, Asp204, and His386 each coordinate Zn(2+).

It belongs to the peptidase M20B family. The cofactor is Zn(2+).

The protein localises to the cytoplasm. The catalysed reaction is Release of the N-terminal residue from a tripeptide.. Cleaves the N-terminal amino acid of tripeptides. This is Peptidase T from Ligilactobacillus salivarius (strain UCC118) (Lactobacillus salivarius).